The sequence spans 373 residues: Sodium-dependent organic anion transporter (373 aa).

The span at 1-15 (MSTDCAGNSTCPVNS) shows a compositional bias: polar residues. The tract at residues 1–21 (MSTDCAGNSTCPVNSTEEDPP) is disordered. The Extracellular portion of the chain corresponds to 1 to 32 (MSTDCAGNSTCPVNSTEEDPPVGMEGHANLKL). Residues Asn8 and Asn14 are each glycosylated (N-linked (GlcNAc...) asparagine). A helical membrane pass occupies residues 33-53 (LFTVLSAVMVGLVMFSFGCSV). Topologically, residues 54-67 (ESQKLWLHLRRPWG) are cytoplasmic. A helical membrane pass occupies residues 68-88 (IAVGLLSQFGLMPLTAYLLAI). The Extracellular portion of the chain corresponds to 89-97 (GFGLKPFQA). The chain crosses the membrane as a helical span at residues 98–118 (IAVLMMGSCPGGTISNVLTFW). Residues 119-126 (VDGDMDLS) lie on the Cytoplasmic side of the membrane. The chain crosses the membrane as a helical span at residues 127–147 (ISMTTCSTVAALGMMPLCLYI). Over 148–157 (YTRSWTLTQN) the chain is Extracellular. Residues 158-178 (LVIPYQSIGITLVSLVVPVAS) form a helical membrane-spanning segment. At 179–195 (GVYVNYRWPKQATVILK) the chain is on the cytoplasmic side. The chain crosses the membrane as a helical span at residues 196–216 (VGAILGGMLLLVVAVTGMVLA). The Extracellular portion of the chain corresponds to 217 to 224 (KGWNTDVT). The helical transmembrane segment at 225–245 (LLVISCIFPLVGHVTGFLLAF) threads the bilayer. The Cytoplasmic segment spans residues 246 to 265 (LTHQSWQRCRTISIETGAQN). A helical membrane pass occupies residues 266 to 283 (IQLCIAMLQLSFSAEYLV). A topological domain (extracellular) is located at residue Gln284. A helical membrane pass occupies residues 285 to 305 (LLNFALAYGLFQVLHGLLIVA). Over 306–373 (AYQAYKRRQK…ELTSHIPSCE (68 aa)) the chain is Cytoplasmic.

It belongs to the bile acid:sodium symporter (BASS) (TC 2.A.28) family. In terms of processing, glycosylated. As to expression, highest expression in lung and testis, moderate expression in heart, bladder and skin, and low expression in blood, liver, stomach, small intestine, spleen, kidney, adrenal gland, seminal vesicle, preputial gland, coagulating gland, lacrimal gland/eye, and brain.

Its subcellular location is the membrane. The enzyme catalyses estrone 3-sulfate(out) + 2 Na(+)(out) = estrone 3-sulfate(in) + 2 Na(+)(in). It carries out the reaction 17beta-estradiol 3-sulfate(out) + 2 Na(+)(out) = 17beta-estradiol 3-sulfate(in) + 2 Na(+)(in). The catalysed reaction is dehydroepiandrosterone 3-sulfate(out) + 2 Na(+)(out) = dehydroepiandrosterone 3-sulfate(in) + 2 Na(+)(in). It catalyses the reaction androst-5-ene-diol 3-sulfate(out) + 2 Na(+)(out) = androst-5-ene-diol 3-sulfate(in) + 2 Na(+)(in). The enzyme catalyses pregnenolone sulfate(out) + 2 Na(+)(out) = pregnenolone sulfate(in) + 2 Na(+)(in). It carries out the reaction taurolithocholate 3-sulfate(out) + 2 Na(+)(out) = taurolithocholate 3-sulfate(in) + 2 Na(+)(in). The catalysed reaction is androsterone 3alpha-sulfate(out) + 2 Na(+)(out) = androsterone 3alpha-sulfate(in) + 2 Na(+)(in). It catalyses the reaction 5alpha-dihydrotestosterone sulfate(out) + 2 Na(+)(out) = 5alpha-dihydrotestosterone sulfate(in) + 2 Na(+)(in). The enzyme catalyses 17beta-estradiol 17-sulfate(out) + 2 Na(+)(out) = 17beta-estradiol 17-sulfate(in) + 2 Na(+)(in). It carries out the reaction 17alpha-hydroxypregnenolone 3-sulfate(out) + 2 Na(+)(out) = 17alpha-hydroxypregnenolone 3-sulfate(in) + 2 Na(+)(in). The catalysed reaction is epiandrosterone 3-sulfate(out) + 2 Na(+)(out) = epiandrosterone 3-sulfate(in) + 2 Na(+)(in). It catalyses the reaction epitestosterone 17-sulfate(out) + 2 Na(+)(out) = epitestosterone 17-sulfate(in) + 2 Na(+)(in). The enzyme catalyses testosterone 17-sulfate(out) + 2 Na(+)(out) = testosterone 17-sulfate(in) + 2 Na(+)(in). It carries out the reaction 16alpha-hydroxydehydroepiandrosterone 3-sulfate(out) + 2 Na(+)(out) = 16alpha-hydroxydehydroepiandrosterone 3-sulfate(in) + 2 Na(+)(in). Functionally, transports sulfoconjugated steroid hormones from the extracellular compartment into the cytosol in a sodium-dependent manner without hydrolysis. Steroid sulfate hormones are commonly considered to be biologically inactive metabolites, that may be activated by steroid sulfatases into free steroids. May play an important role by delivering sulfoconjugated steroids to specific target cells in reproductive organs. May play a role transporting the estriol precursor 16alpha-hydroxydehydroepiandrosterone 3-sulfate (16a-OH-DHEAS) at the fetal blood vessel endothelium. Can also transport other sulfoconjugated molecules such as taurolithocholic acid-3-sulfate and sulfoconjugated pyrenes. The chain is Sodium-dependent organic anion transporter (Slc10a6) from Mus musculus (Mouse).